Here is a 382-residue protein sequence, read N- to C-terminus: Innexin-8 (382 aa).

A run of 4 helical transmembrane segments spans residues 29-49 (LITA…TYVG), 103-123 (QWSS…KFLW), 187-207 (VIKI…AIFL), and 270-290 (IFLF…IAHF).

It belongs to the pannexin family.

The protein resides in the cell membrane. It is found in the cell junction. The protein localises to the gap junction. Its function is as follows. Structural component of the gap junctions. In Caenorhabditis elegans, this protein is Innexin-8 (inx-8).